A 330-amino-acid chain; its full sequence is G-protein coupled receptor 157 (330 aa).

Residues 1 to 15 (MPTPAPPTELLPWER) lie on the Extracellular side of the membrane. Residues 16 to 36 (AVVLLSCVLSALGSGLLVATH) form a helical membrane-spanning segment. Residues 37–48 (ALWPDLRSRARR) are Cytoplasmic-facing. The chain crosses the membrane as a helical span at residues 49–69 (LLLFLSLADLLSAASYFYGVL). Residues 70–87 (QDFAGTSWDCVLQGALST) lie on the Extracellular side of the membrane. Residues 88–108 (FANTSSFFWTVAIALYLYLNI) traverse the membrane as a helical segment. Residues 109 to 119 (VRATRGPCTDH) lie on the Cytoplasmic side of the membrane. A helical transmembrane segment spans residues 120-140 (LVWAFHLISWGVPLAITVAAV). Residues 141 to 166 (CLKKIGYDASDVSVGWCWINLEAEDR) are Extracellular-facing. Residues 167–187 (VLWMLLTGKLWEMLAYILLPL) traverse the membrane as a helical segment. Over 188–227 (LYLLVRKHINRAHQALSEYRPIWEGRQLQRGSPTSMADKK) the chain is Cytoplasmic. The chain crosses the membrane as a helical span at residues 228–250 (LILIPFIFICLRVWSTVRFVLTL). Residues 251-259 (CGSPVVQAP) lie on the Extracellular side of the membrane. The chain crosses the membrane as a helical span at residues 260–282 (VLVVLHGIGNTFQGGANCIMFVL). Residues 283 to 330 (CTRAVRTRLFSLCCCYPRPPTQNPPGASIPPKMGESQESRRTPEVPST) are Cytoplasmic-facing. The disordered stretch occupies residues 303-330 (TQNPPGASIPPKMGESQESRRTPEVPST). The segment covering 317-330 (ESQESRRTPEVPST) has biased composition (basic and acidic residues).

This sequence belongs to the G-protein coupled receptor 2 family.

Its subcellular location is the cell projection. It is found in the cilium membrane. Orphan receptor that promotes neuronal differentiation of radial glial progenitors (RGPs). The activity of this receptor is mediated by a G(q)-protein that activates a phosphatidylinositol-calcium second messenger. This chain is G-protein coupled receptor 157 (Gpr157), found in Rattus norvegicus (Rat).